The primary structure comprises 439 residues: 3-phosphoshikimate 1-carboxyvinyltransferase (439 aa).

Positions 31, 32, and 36 each coordinate 3-phosphoshikimate. Lys-31 is a binding site for phosphoenolpyruvate. 2 residues coordinate phosphoenolpyruvate: Gly-103 and Arg-131. Residues Ser-175, Gln-177, Asp-322, and Lys-349 each contribute to the 3-phosphoshikimate site. Gln-177 is a binding site for phosphoenolpyruvate. Catalysis depends on Asp-322, which acts as the Proton acceptor. Arg-353 and Arg-397 together coordinate phosphoenolpyruvate.

It belongs to the EPSP synthase family. Monomer.

It is found in the cytoplasm. It carries out the reaction 3-phosphoshikimate + phosphoenolpyruvate = 5-O-(1-carboxyvinyl)-3-phosphoshikimate + phosphate. It participates in metabolic intermediate biosynthesis; chorismate biosynthesis; chorismate from D-erythrose 4-phosphate and phosphoenolpyruvate: step 6/7. Functionally, catalyzes the transfer of the enolpyruvyl moiety of phosphoenolpyruvate (PEP) to the 5-hydroxyl of shikimate-3-phosphate (S3P) to produce enolpyruvyl shikimate-3-phosphate and inorganic phosphate. The sequence is that of 3-phosphoshikimate 1-carboxyvinyltransferase from Clostridium tetani (strain Massachusetts / E88).